A 205-amino-acid polypeptide reads, in one-letter code: DUF724 domain-containing protein 4 (205 aa).

Residues 28–59 form a disordered region; sequence DASGRGKRRRVEQEHHSDLNNETAAPTGGSAG. The DUF724 domain occupies 63–189; that stretch reads VLPFTKTLAS…MADDYSKLKK (127 aa).

As to expression, expressed in roots, leaves, stems, flowers and siliques.

It is found in the nucleus. In terms of biological role, may be involved in the polar growth of plant cells via transportation of RNAs. This Arabidopsis thaliana (Mouse-ear cress) protein is DUF724 domain-containing protein 4.